We begin with the raw amino-acid sequence, 696 residues long: Glycosyltransferase GlyA (696 aa).

The tract at residues 1–301 (MLVDDKITVI…NQLSRQEESE (301 aa)) is GT2 domain. Residues 302 to 556 (KKAIVLAANY…TELGQNHHLH (255 aa)) are GT8 domain. Residues 308–313 (AANYGY) and 399–400 (DC) each bind UDP. Mn(2+) contacts are provided by Asp399, Asp401, and His518. 518 to 524 (HYLSHRK) contributes to the UDP binding site.

This sequence in the N-terminal section; belongs to the glycosyltransferase 2 family. It in the central section; belongs to the glycosyltransferase 8 family.

It functions in the pathway protein modification; protein glycosylation. Its function is as follows. Involved in the polymorphic O-glycosylation of the serine-rich repeat protein PsrP. Catalyzes the fourth step in glycosylation of PsrP in this bacteria. Can transfer the sugar from UDP-galactose to the terminal sugar moiety of PsrP-GlcNAc-Glc-Gal or of PsrP-GlcNAc-Glc-Glc (using truncated substrates with the PsrP SSR1 domain). Has hydrolytic activity against UDP-galactose and to a lesser extent against UDP-glucose. This Streptococcus pneumoniae serotype 4 (strain ATCC BAA-334 / TIGR4) protein is Glycosyltransferase GlyA.